We begin with the raw amino-acid sequence, 306 residues long: tRNA dimethylallyltransferase 2 (306 aa).

ATP is bound at residue 11–18 (GPTASGKT). Residue 13–18 (TASGKT) coordinates substrate. Residues 36–39 (DSRQ) are interaction with substrate tRNA.

This sequence belongs to the IPP transferase family. In terms of assembly, monomer. Mg(2+) is required as a cofactor.

The enzyme catalyses adenosine(37) in tRNA + dimethylallyl diphosphate = N(6)-dimethylallyladenosine(37) in tRNA + diphosphate. Catalyzes the transfer of a dimethylallyl group onto the adenine at position 37 in tRNAs that read codons beginning with uridine, leading to the formation of N6-(dimethylallyl)adenosine (i(6)A). The sequence is that of tRNA dimethylallyltransferase 2 from Bacteroides fragilis (strain ATCC 25285 / DSM 2151 / CCUG 4856 / JCM 11019 / LMG 10263 / NCTC 9343 / Onslow / VPI 2553 / EN-2).